The following is a 420-amino-acid chain: UDP-N-acetylglucosamine 1-carboxyvinyltransferase (420 aa).

Lys22–Asn23 is a phosphoenolpyruvate binding site. Arg93 is a binding site for UDP-N-acetyl-alpha-D-glucosamine. The Proton donor role is filled by Cys117. 2-(S-cysteinyl)pyruvic acid O-phosphothioketal is present on Cys117. UDP-N-acetyl-alpha-D-glucosamine-binding positions include Arg122–Leu126, Asp307, and Val329.

This sequence belongs to the EPSP synthase family. MurA subfamily.

It localises to the cytoplasm. It catalyses the reaction phosphoenolpyruvate + UDP-N-acetyl-alpha-D-glucosamine = UDP-N-acetyl-3-O-(1-carboxyvinyl)-alpha-D-glucosamine + phosphate. The protein operates within cell wall biogenesis; peptidoglycan biosynthesis. Functionally, cell wall formation. Adds enolpyruvyl to UDP-N-acetylglucosamine. This Hahella chejuensis (strain KCTC 2396) protein is UDP-N-acetylglucosamine 1-carboxyvinyltransferase.